We begin with the raw amino-acid sequence, 238 residues long: MRIMASPFAVLLQNVSFRYTADARFILHEVDLAIPKGAYLSVVGENGSGKSTLVKLVLKLLKPSTGTIAHFVQRVGSVPQTKMHTLYFPLTVYEMLNSYRRLLRISHKWVVDAVLEEVGMRGAKKKLVYTLSGGELQKVYIARSLIGDPDLLVLDELSTGIDSRGQKDIYALLKGLNTSRNVTVISVEHNLDAAITNSTQIFHLSEGHGHLCNPQQYVSEFLDMQKKDALACAQCRSR.

The ABC transporter domain maps to 10–231 (VLLQNVSFRY…LDMQKKDALA (222 aa)). 44 to 51 (GENGSGKS) contributes to the ATP binding site.

Belongs to the ABC transporter superfamily.

The protein resides in the cell inner membrane. In terms of biological role, part of an ATP-driven transport system TP_0034/TP_0035/TP_0036 for a metal. Probably responsible for energy coupling to the transport system. This Treponema pallidum (strain Nichols) protein is Probable metal transport system ATP-binding protein TP_0035.